The sequence spans 475 residues: ATP synthase subunit beta (475 aa).

Residue 153 to 160 (GGAGVGKT) participates in ATP binding.

The protein belongs to the ATPase alpha/beta chains family. F-type ATPases have 2 components, CF(1) - the catalytic core - and CF(0) - the membrane proton channel. CF(1) has five subunits: alpha(3), beta(3), gamma(1), delta(1), epsilon(1). CF(0) has three main subunits: a(1), b(2) and c(9-12). The alpha and beta chains form an alternating ring which encloses part of the gamma chain. CF(1) is attached to CF(0) by a central stalk formed by the gamma and epsilon chains, while a peripheral stalk is formed by the delta and b chains.

The protein resides in the cell membrane. The catalysed reaction is ATP + H2O + 4 H(+)(in) = ADP + phosphate + 5 H(+)(out). Functionally, produces ATP from ADP in the presence of a proton gradient across the membrane. The catalytic sites are hosted primarily by the beta subunits. In Limosilactobacillus reuteri (strain DSM 20016) (Lactobacillus reuteri), this protein is ATP synthase subunit beta.